The sequence spans 119 residues: Ribonuclease P protein component (119 aa).

Residues 1–20 are disordered; that stretch reads MLPAQHRMTRSTEFGATVSK.

The protein belongs to the RnpA family. In terms of assembly, consists of a catalytic RNA component (M1 or rnpB) and a protein subunit.

The enzyme catalyses Endonucleolytic cleavage of RNA, removing 5'-extranucleotides from tRNA precursor.. Its function is as follows. RNaseP catalyzes the removal of the 5'-leader sequence from pre-tRNA to produce the mature 5'-terminus. It can also cleave other RNA substrates such as 4.5S RNA. The protein component plays an auxiliary but essential role in vivo by binding to the 5'-leader sequence and broadening the substrate specificity of the ribozyme. The sequence is that of Ribonuclease P protein component from Mycolicibacterium vanbaalenii (strain DSM 7251 / JCM 13017 / BCRC 16820 / KCTC 9966 / NRRL B-24157 / PYR-1) (Mycobacterium vanbaalenii).